The sequence spans 94 residues: Pyrimidine/purine nucleoside phosphorylase (94 aa).

The protein belongs to the nucleoside phosphorylase PpnP family.

The catalysed reaction is a purine D-ribonucleoside + phosphate = a purine nucleobase + alpha-D-ribose 1-phosphate. The enzyme catalyses adenosine + phosphate = alpha-D-ribose 1-phosphate + adenine. It catalyses the reaction cytidine + phosphate = cytosine + alpha-D-ribose 1-phosphate. It carries out the reaction guanosine + phosphate = alpha-D-ribose 1-phosphate + guanine. The catalysed reaction is inosine + phosphate = alpha-D-ribose 1-phosphate + hypoxanthine. The enzyme catalyses thymidine + phosphate = 2-deoxy-alpha-D-ribose 1-phosphate + thymine. It catalyses the reaction uridine + phosphate = alpha-D-ribose 1-phosphate + uracil. It carries out the reaction xanthosine + phosphate = alpha-D-ribose 1-phosphate + xanthine. Catalyzes the phosphorolysis of diverse nucleosides, yielding D-ribose 1-phosphate and the respective free bases. Can use uridine, adenosine, guanosine, cytidine, thymidine, inosine and xanthosine as substrates. Also catalyzes the reverse reactions. The chain is Pyrimidine/purine nucleoside phosphorylase from Pseudomonas putida (strain W619).